Reading from the N-terminus, the 48-residue chain is Omega-agatoxin-Aa5a (48 aa).

Disulfide bonds link C3–C16, C10–C21, C15–C32, and C23–C30.

Belongs to the neurotoxin 02 (plectoxin) family. In terms of tissue distribution, expressed by the venom gland.

Its subcellular location is the secreted. Functionally, the toxin blocks voltage-gated calcium channels in rat cerebellar granule cells (IC(50)=200 nM). This Agelenopsis aperta (North American funnel-web spider) protein is Omega-agatoxin-Aa5a.